We begin with the raw amino-acid sequence, 572 residues long: Urease subunit alpha (572 aa).

The 440-residue stretch at 133-572 (GGIDLHVHYI…TSLSQRYFLF (440 aa)) folds into the Urease domain. 3 residues coordinate Ni(2+): histidine 138, histidine 140, and lysine 221. N6-carboxylysine is present on lysine 221. Histidine 223 contributes to the substrate binding site. The Ni(2+) site is built by histidine 250 and histidine 276. Catalysis depends on histidine 324, which acts as the Proton donor. A Ni(2+)-binding site is contributed by aspartate 364.

It belongs to the metallo-dependent hydrolases superfamily. Urease alpha subunit family. In terms of assembly, heterotrimer of UreA (gamma), UreB (beta) and UreC (alpha) subunits. Three heterotrimers associate to form the active enzyme. The cofactor is Ni cation. In terms of processing, carboxylation allows a single lysine to coordinate two nickel ions.

The protein localises to the cytoplasm. It catalyses the reaction urea + 2 H2O + H(+) = hydrogencarbonate + 2 NH4(+). Its pathway is nitrogen metabolism; urea degradation; CO(2) and NH(3) from urea (urease route): step 1/1. The sequence is that of Urease subunit alpha from Streptococcus thermophilus (strain CNRZ 1066).